The following is a 553-amino-acid chain: Putative transport protein YidE (553 aa).

5 helical membrane passes run 4–24, 28–48, 65–85, 95–115, and 158–178; these read IALT…IGNV, GIGL…HFVS, FGLI…FFAS, LFAV…HKLF, and MSYA…MWML. RCK C-terminal domains follow at residues 191–276 and 279–361; these read QQHE…VIGQ and DTSL…VLGN. The next 6 helical transmembrane spans lie at 371–391, 393–413, 439–459, 464–484, 493–513, and 533–553; these read MLPV…PVFV, GFPA…ALIL, IVLF…NTLV, LSWI…VGIL, YLTM…LAFA, and LVMF…WSIG.

This sequence belongs to the AAE transporter (TC 2.A.81) family. YidE subfamily.

It localises to the cell membrane. This is Putative transport protein YidE from Shigella boydii serotype 18 (strain CDC 3083-94 / BS512).